We begin with the raw amino-acid sequence, 150 residues long: Transcription antitermination protein NusB (150 aa).

It belongs to the NusB family.

Its function is as follows. Involved in transcription antitermination. Required for transcription of ribosomal RNA (rRNA) genes. Binds specifically to the boxA antiterminator sequence of the ribosomal RNA (rrn) operons. The polypeptide is Transcription antitermination protein NusB (Chloroflexus aggregans (strain MD-66 / DSM 9485)).